The chain runs to 291 residues: Putative GATA transcription factor 13 (291 aa).

The GATA-type zinc-finger motif lies at 187–241 (KSRRLKCTHCETTTTPQWREGPNGRKTLCNACGIRFRSGRLVLEYRPAASPTFIP). Residues 271–291 (TSGPETRSRLRNFGRPMSYGQ) form a disordered region.

Belongs to the type IV zinc-finger family. Class A subfamily.

Its subcellular location is the nucleus. Transcriptional activator that specifically binds 5'-GATA-3' or 5'-GAT-3' motifs within gene promoters. May be involved in the regulation of some light-responsive genes. This Arabidopsis thaliana (Mouse-ear cress) protein is Putative GATA transcription factor 13 (GATA13).